Consider the following 428-residue polypeptide: Trigger factor (428 aa).

The PPIase FKBP-type domain occupies 163–248 (GDTAVIDFEG…VHEVKAKQLP (86 aa)).

Belongs to the FKBP-type PPIase family. Tig subfamily.

Its subcellular location is the cytoplasm. It catalyses the reaction [protein]-peptidylproline (omega=180) = [protein]-peptidylproline (omega=0). In terms of biological role, involved in protein export. Acts as a chaperone by maintaining the newly synthesized protein in an open conformation. Functions as a peptidyl-prolyl cis-trans isomerase. In Geobacillus thermodenitrificans (strain NG80-2), this protein is Trigger factor.